Reading from the N-terminus, the 628-residue chain is MQANIKWLDDPEIFRVNQLPAHSDHPFFKNYREWQNNHSSFKQSLNGMWQFKFSKDPQSRPVDFYKKDFNTSSFTTIPVPSEIELNNFAQNQYINTLYPWEGKIFRRPAYALNKSDAEEGSFSEGKDNTVGSYIKHFDLNPELRDHDIHIVFEGAERAMYVWLNGHFIGYAEDSFTPSEFDLTKYIKEKDNILAVEVFKHSTASWLEDQDMFRFSGLFRSVELLAFPETHLVDLDLKPTVCDNYQDGIFNAELKFTGSLNGHVHLSVEDVNGSAILEQDVPLDSEVEFTSSTLENIHLWDNHHPYLYQLLIEVHDENGHLVELIPYQFGFRRIEINQDKVILLNGKCLIINGVNRHEWNAKTGRSITLNDMEKDIDTFKENNINAVRTCHYPNQIPWYYLCDQNGIYMMAENNLESHGTWQKMGQVEPSDNVPGSVPEWREAVIDRARNNYETFKNHTSILFWSLGNESYAGSNIVAMNEFYKEHDSSRLVHYEGVVHRPELKDQISDIESHMYLPPKEVAEYLRNNPQKPFMECEYMHDMGNSDGGMGSYIKLIDEYPQYVGGFIWDFIDQALLVYDPISKQNVLRYGGDFDDRHSDYEFSGDGLMFADRTPKPAMQEVRYYYGLHK.

Glutamate 468 functions as the Proton donor in the catalytic mechanism. Residue glutamate 536 is the Nucleophile of the active site.

This sequence belongs to the glycosyl hydrolase 2 family. Heterodimer of a large (LacL) and a small subunit (LacM).

It carries out the reaction Hydrolysis of terminal non-reducing beta-D-galactose residues in beta-D-galactosides.. In terms of biological role, component of a beta-galactosidase. The polypeptide is Beta-galactosidase large subunit (lacL) (Lactobacillus acidophilus (strain ATCC 700396 / NCK56 / N2 / NCFM)).